Consider the following 473-residue polypeptide: Photosystem II CP43 reaction center protein (473 aa).

Residues 1–14 (MKTLYSLRRFYPVE) constitute a propeptide that is removed on maturation. Thr-15 bears the N-acetylthreonine mark. Phosphothreonine is present on Thr-15. 5 consecutive transmembrane segments (helical) span residues 69 to 93 (LFEV…PHLA), 134 to 155 (LLGP…KDRN), 178 to 200 (KALY…RKIT), 255 to 275 (KPFA…LSYS), and 291 to 312 (WFNN…ASQA). Residue Glu-367 coordinates [CaMn4O5] cluster. A helical transmembrane segment spans residues 447-471 (RARAAAAGFEKGIDRDFEPVLSMTP).

Belongs to the PsbB/PsbC family. PsbC subfamily. In terms of assembly, PSII is composed of 1 copy each of membrane proteins PsbA, PsbB, PsbC, PsbD, PsbE, PsbF, PsbH, PsbI, PsbJ, PsbK, PsbL, PsbM, PsbT, PsbX, PsbY, PsbZ, Psb30/Ycf12, at least 3 peripheral proteins of the oxygen-evolving complex and a large number of cofactors. It forms dimeric complexes. It depends on Binds multiple chlorophylls and provides some of the ligands for the Ca-4Mn-5O cluster of the oxygen-evolving complex. It may also provide a ligand for a Cl- that is required for oxygen evolution. PSII binds additional chlorophylls, carotenoids and specific lipids. as a cofactor.

The protein localises to the plastid. It localises to the chloroplast thylakoid membrane. One of the components of the core complex of photosystem II (PSII). It binds chlorophyll and helps catalyze the primary light-induced photochemical processes of PSII. PSII is a light-driven water:plastoquinone oxidoreductase, using light energy to abstract electrons from H(2)O, generating O(2) and a proton gradient subsequently used for ATP formation. This is Photosystem II CP43 reaction center protein from Lactuca sativa (Garden lettuce).